A 498-amino-acid polypeptide reads, in one-letter code: ATP synthase subunit beta, chloroplastic (498 aa).

Residue 172-179 (GGAGVGKT) coordinates ATP.

Belongs to the ATPase alpha/beta chains family. F-type ATPases have 2 components, CF(1) - the catalytic core - and CF(0) - the membrane proton channel. CF(1) has five subunits: alpha(3), beta(3), gamma(1), delta(1), epsilon(1). CF(0) has four main subunits: a(1), b(1), b'(1) and c(9-12).

The protein localises to the plastid. It is found in the chloroplast thylakoid membrane. The enzyme catalyses ATP + H2O + 4 H(+)(in) = ADP + phosphate + 5 H(+)(out). Produces ATP from ADP in the presence of a proton gradient across the membrane. The catalytic sites are hosted primarily by the beta subunits. The chain is ATP synthase subunit beta, chloroplastic from Myristica fragrans (Nutmeg).